Reading from the N-terminus, the 298-residue chain is MGTGIEMLSRKEQHNANKLHKRLRRLVGTAIADFNMIESGDRVMVCLSGGKDSYALLDILRSLQAHAATQFELIAVNLDQKQPGFPEHVLPNYLTSIGMPFRIVEQDTYSVVKRLIPEGKTTCSLCSRLRRGVLYRVADELGATKIALGHHRDDILETLLLNLFHGGKLKTMPPKLVSDDGKHIVIRPLAYCKEKDLAAYAEMENFPIIPCNLCGSQKNMQRQVVKEMLQQWDKKFPGRLENMFSSLQNIQPSHLLDSSLYDFHGLKTGNGPVVDGDRAFDPEPFEPGVEELLSLNKD.

Positions 48–53 (SGGKDS) match the PP-loop motif motif. 3 residues coordinate [4Fe-4S] cluster: Cys-123, Cys-126, and Cys-214.

This sequence belongs to the TtcA family. In terms of assembly, homodimer. The cofactor is Mg(2+). [4Fe-4S] cluster is required as a cofactor.

Its subcellular location is the cytoplasm. The enzyme catalyses cytidine(32) in tRNA + S-sulfanyl-L-cysteinyl-[cysteine desulfurase] + AH2 + ATP = 2-thiocytidine(32) in tRNA + L-cysteinyl-[cysteine desulfurase] + A + AMP + diphosphate + H(+). Its pathway is tRNA modification. In terms of biological role, catalyzes the ATP-dependent 2-thiolation of cytidine in position 32 of tRNA, to form 2-thiocytidine (s(2)C32). The sulfur atoms are provided by the cysteine/cysteine desulfurase (IscS) system. In Nitrosospira multiformis (strain ATCC 25196 / NCIMB 11849 / C 71), this protein is tRNA-cytidine(32) 2-sulfurtransferase.